The chain runs to 214 residues: Protein OPG176 (214 aa).

Belongs to the orthopoxvirus OPG176 family. As to quaternary structure, tetramer. Interacts with host MYD88, TRF4, TICAM2 and MAL.

In terms of biological role, BCL2-like protein which disrupts the host immune response by inhibiting the TLR4 signaling pathway leading to NF-kappa-B activation. Acts close to the plasma membrane and targets several host TIR-domain containing adapter proteins including MYD88, TIRAP, TRIF and TICAM2. In turn, blocks the host NF-kappa-B and TRIF-mediated IRF3 activation. The chain is Protein OPG176 (OPG176) from Homo sapiens (Human).